Here is a 147-residue protein sequence, read N- to C-terminus: Low molecular weight protein-tyrosine-phosphatase Wzb (147 aa).

Catalysis depends on cysteine 9, which acts as the Nucleophile. Arginine 15 is a catalytic residue. Aspartate 115 serves as the catalytic Proton donor.

The protein belongs to the low molecular weight phosphotyrosine protein phosphatase family.

The enzyme catalyses O-phospho-L-tyrosyl-[protein] + H2O = L-tyrosyl-[protein] + phosphate. It functions in the pathway glycan metabolism; exopolysaccharide biosynthesis. Functionally, dephosphorylates Wzc. Required for the extracellular polysaccharide colanic acid synthesis. Probably involved in the export of colanic acid from the cell to medium. Involved in protection of cells against contact-dependent growth inhibition (CDI). The protein is Low molecular weight protein-tyrosine-phosphatase Wzb (wzb) of Escherichia coli O157:H7.